The following is a 323-amino-acid chain: Protein REDOX 2 (323 aa).

An NADP(+)-binding site is contributed by Asp-53. The Proton donor role is filled by Tyr-58. His-121 contributes to the substrate binding site. NADP(+) contacts are provided by residues 167-168 (SN), Gln-189, 215-220 (WSPLLS), and 289-297 (DQIHEIPQR). A disordered region spans residues 302–323 (GEEFMHPEGPIKSPEELWDGDL).

This sequence belongs to the aldo/keto reductase family. In terms of assembly, monomer. As to expression, expressed in leaf epidermis.

It catalyses the reaction 15alpha-stemmadenine + NADP(+) = 17-dehydrostemmadenine + NADPH + 2 H(+). Its pathway is alkaloid biosynthesis. Its function is as follows. Component of iboga and aspidosperma monoterpenoid indole alkaloids (MIAs, e.g. tabersonine and catharanthine) biosynthesis pathway from 19E-geissoschizine. Catalyzes the second oxidation step of the unstable intermediate product resulting from the reaction triggered by the geissoschizine oxidase (GO) in the stemmadenine biosynthesis process from 19E-geissoschizine. This is Protein REDOX 2 from Catharanthus roseus (Madagascar periwinkle).